The primary structure comprises 59 residues: Large ribosomal subunit protein bL32 (59 aa).

The tract at residues 1-20 (MAVPRNRHSNARKNIRRSHH) is disordered.

The protein belongs to the bacterial ribosomal protein bL32 family.

The protein is Large ribosomal subunit protein bL32 (rpmF) of Chlamydia muridarum (strain MoPn / Nigg).